The sequence spans 261 residues: tRNA threonylcarbamoyladenosine dehydratase (261 aa).

Residues 230–250 form a helical membrane-spanning segment; the sequence is CANGFGAATMITATFGFFAVS.

Belongs to the HesA/MoeB/ThiF family.

It is found in the membrane. Its function is as follows. Catalyzes the ATP-dependent dehydration of threonylcarbamoyladenosine at position 37 (t(6)A37) to form cyclic t(6)A37 (ct(6)A37) in tRNAs that read codons beginning with adenine. This Haemophilus influenzae (strain ATCC 51907 / DSM 11121 / KW20 / Rd) protein is tRNA threonylcarbamoyladenosine dehydratase (tcdA).